The primary structure comprises 363 residues: Isopentenyl-diphosphate delta-isomerase (363 aa).

Residue 6 to 7 (RK) participates in substrate binding. FMN-binding positions include 64–66 (AMT), S94, and N123. Q153 contributes to the substrate binding site. E154 serves as a coordination point for Mg(2+). FMN-binding positions include K185, S210, T215, 259–261 (GVR), and 280–281 (SA).

Belongs to the IPP isomerase type 2 family. Homooctamer. Dimer of tetramers. It depends on Mg(2+) as a cofactor. Requires FMN as cofactor. The cofactor is NADPH.

It localises to the cytoplasm. The catalysed reaction is isopentenyl diphosphate = dimethylallyl diphosphate. Its function is as follows. Involved in the biosynthesis of isoprenoids. Catalyzes the 1,3-allylic rearrangement of the homoallylic substrate isopentenyl (IPP) to its allylic isomer, dimethylallyl diphosphate (DMAPP). The sequence is that of Isopentenyl-diphosphate delta-isomerase from Streptomyces sp. (strain CL190).